The sequence spans 166 residues: MAKGGAKKAAAAAARAAANRMLADNRQARHQYEILETLETGIELVGTEVKSIRNGKANLRDGFCLIRNGELQLHNVHISPHTHAGNYFNHDPLRTRKLLAHRREIDKFRGLVDQKGLTLIPLSLQLKGSWIKLTIGLGKGRKLHDKRAAEKEKQSKKDVKAAMERY.

Residues 146 to 166 (KRAAEKEKQSKKDVKAAMERY) form a disordered region.

This sequence belongs to the SmpB family.

It is found in the cytoplasm. Functionally, required for rescue of stalled ribosomes mediated by trans-translation. Binds to transfer-messenger RNA (tmRNA), required for stable association of tmRNA with ribosomes. tmRNA and SmpB together mimic tRNA shape, replacing the anticodon stem-loop with SmpB. tmRNA is encoded by the ssrA gene; the 2 termini fold to resemble tRNA(Ala) and it encodes a 'tag peptide', a short internal open reading frame. During trans-translation Ala-aminoacylated tmRNA acts like a tRNA, entering the A-site of stalled ribosomes, displacing the stalled mRNA. The ribosome then switches to translate the ORF on the tmRNA; the nascent peptide is terminated with the 'tag peptide' encoded by the tmRNA and targeted for degradation. The ribosome is freed to recommence translation, which seems to be the essential function of trans-translation. The polypeptide is SsrA-binding protein (Synechococcus sp. (strain CC9605)).